The chain runs to 787 residues: Alpha-glucosidase 2 (787 aa).

Residues Asp-407 and Glu-410 contribute to the active site. Catalysis depends on Asp-484, which acts as the Proton donor.

It belongs to the glycosyl hydrolase 31 family. As to quaternary structure, homohexamer.

It catalyses the reaction Hydrolysis of terminal, non-reducing (1-&gt;4)-linked alpha-D-glucose residues with release of alpha-D-glucose.. This is Alpha-glucosidase 2 from Bacillus thermoamyloliquefaciens.